The chain runs to 101 residues: Urease subunit beta (101 aa).

This sequence belongs to the urease beta subunit family. Heterotrimer of UreA (gamma), UreB (beta) and UreC (alpha) subunits. Three heterotrimers associate to form the active enzyme.

The protein resides in the cytoplasm. It catalyses the reaction urea + 2 H2O + H(+) = hydrogencarbonate + 2 NH4(+). Its pathway is nitrogen metabolism; urea degradation; CO(2) and NH(3) from urea (urease route): step 1/1. The chain is Urease subunit beta from Ruegeria pomeroyi (strain ATCC 700808 / DSM 15171 / DSS-3) (Silicibacter pomeroyi).